Consider the following 589-residue polypeptide: Sphingosine-1-phosphate lyase (589 aa).

Residues 1–58 (MSGVSNKTVSINGWYGMPIHLLREEGDFAQFMILTINELKIAIHGYLRNTPWYNMLKD) lie on the Lumenal side of the membrane. A glycan (N-linked (GlcNAc...) asparagine) is linked at Asn6. The helical transmembrane segment at 59 to 76 (YLFVIFCYKLISNFFYLL) threads the bilayer. At 77 to 589 (KVYGPVRLAV…LGPGEDTATK (513 aa)) the chain is on the cytoplasmic side. Lys380 is subject to N6-(pyridoxal phosphate)lysine.

Belongs to the group II decarboxylase family. Sphingosine-1-phosphate lyase subfamily. Homodimer. It depends on pyridoxal 5'-phosphate as a cofactor. In terms of processing, glycosylated.

The protein localises to the endoplasmic reticulum membrane. The catalysed reaction is sphinganine 1-phosphate = hexadecanal + phosphoethanolamine. It carries out the reaction (4R)-hydroxysphinganine 1-phosphate = (2R)-hydroxyhexadecanal + phosphoethanolamine. It functions in the pathway lipid metabolism; sphingolipid metabolism. Its function is as follows. Sphingosine-1-phosphate lyase that cleaves phosphorylated sphingoid bases (PSBs), such as sphingosine-1-phosphate, into fatty aldehydes and phosphoethanolamine. Prefers C-16 dihydrosphingosine-l-phosphate (DHS-P) as a substrate. Regulates intracellular levels of sphingolipid long-chain base phosphates (LCBPs). Plays a role in the regulation of global responses to nutrient deprivation in yeast. The sequence is that of Sphingosine-1-phosphate lyase from Saccharomyces cerevisiae (strain ATCC 204508 / S288c) (Baker's yeast).